The sequence spans 301 residues: MEISDFSSMKLNSRPELIDFEGISMIHYFTDNWEKVKNFQARPDDILIATYPKAGTTWVSYILDLLYFGNESPERQTSQPIYMRVPFLEACFEGIPFGTELADNLPTSPRLIKTHLPVQLVPKSFWEQNSKVVYVARNAKDNAVSYFHFDRMNMGQPEPGDWNTFLQKFMEGRNVFGPWYDHVNGYWKKKQTYSNILYMFYEDMVENTGREVERLCSFLGLSTSAAERERITKGVQFDAMKQNKMTNYSTIPVMDFKISPFMRKGKVGDWRNHFTVAQNEQFDEVYKQKMKNTTVKFRTEL.

53 to 58 contacts 3'-phosphoadenylyl sulfate; sequence KAGTTW. Histidine 115 serves as the catalytic Proton acceptor. 3'-phosphoadenylyl sulfate is bound by residues arginine 137, serine 145, tyrosine 201, 235–240, and 263–265; these read VQFDAM and RKG.

The protein belongs to the sulfotransferase 1 family.

The protein localises to the cytoplasm. Inhibited by Hg(2+), Co(2+), Zn(2+), Cd(2+), Cu(2+) and Pb(2+) ions. Activated slightly by Mn(2+), Ca(2+) and Mg(2+) ions. Sulfotransferase that utilizes 3'-phospho-5'-adenylyl sulfate (PAPS) as sulfonate donor to catalyze the sulfate conjugation of a variety of xenobiotic and endogenous compounds, including dopamine, T3 (triiodo-L-thyronine), T4 (thyroxine), estrone, DHEA (dehydroepiandrosterone), flavonoids, isoflavonoids and other phenolic compounds. In Danio rerio (Zebrafish), this protein is Cytosolic sulfotransferase 3.